The following is a 386-amino-acid chain: Heat-inducible transcription repressor HrcA (386 aa).

This sequence belongs to the HrcA family.

In terms of biological role, negative regulator of class I heat shock genes (grpE-dnaK-dnaJ and groELS operons). Prevents heat-shock induction of these operons. This Chlamydia caviae (strain ATCC VR-813 / DSM 19441 / 03DC25 / GPIC) (Chlamydophila caviae) protein is Heat-inducible transcription repressor HrcA.